Here is a 372-residue protein sequence, read N- to C-terminus: Ketol-acid reductoisomerase (NADP(+)) (372 aa).

Positions 1–25 are disordered; it reads MTETKTQTETETDEEEGTDTDTALD. Residues 10–19 are compositionally biased toward acidic residues; it reads TETDEEEGTD. Residues 24 to 205 form the KARI N-terminal Rossmann domain; sequence LDTTIYYDDD…GCTRAGAIET (182 aa). Residues 49-52, serine 75, serine 77, and 107-110 each bind NADP(+); these read YGSQ and DTVQ. Histidine 131 is a catalytic residue. An NADP(+)-binding site is contributed by glycine 157. The KARI C-terminal knotted domain occupies 206–351; the sequence is TFREETETDL…EPLRDLFAWS (146 aa). 4 residues coordinate Mg(2+): aspartate 214, glutamate 218, glutamate 250, and glutamate 254. Serine 275 is a binding site for substrate. The segment at 351–372 is disordered; the sequence is SDNEETNDESDVVSEPEAAADD. Residues 352–372 show a composition bias toward acidic residues; the sequence is DNEETNDESDVVSEPEAAADD.

It belongs to the ketol-acid reductoisomerase family. The cofactor is Mg(2+).

The catalysed reaction is (2R)-2,3-dihydroxy-3-methylbutanoate + NADP(+) = (2S)-2-acetolactate + NADPH + H(+). It catalyses the reaction (2R,3R)-2,3-dihydroxy-3-methylpentanoate + NADP(+) = (S)-2-ethyl-2-hydroxy-3-oxobutanoate + NADPH + H(+). Its pathway is amino-acid biosynthesis; L-isoleucine biosynthesis; L-isoleucine from 2-oxobutanoate: step 2/4. The protein operates within amino-acid biosynthesis; L-valine biosynthesis; L-valine from pyruvate: step 2/4. In terms of biological role, involved in the biosynthesis of branched-chain amino acids (BCAA). Catalyzes an alkyl-migration followed by a ketol-acid reduction of (S)-2-acetolactate (S2AL) to yield (R)-2,3-dihydroxy-isovalerate. In the isomerase reaction, S2AL is rearranged via a Mg-dependent methyl migration to produce 3-hydroxy-3-methyl-2-ketobutyrate (HMKB). In the reductase reaction, this 2-ketoacid undergoes a metal-dependent reduction by NADPH to yield (R)-2,3-dihydroxy-isovalerate. The polypeptide is Ketol-acid reductoisomerase (NADP(+)) (Haloquadratum walsbyi (strain DSM 16790 / HBSQ001)).